Consider the following 213-residue polypeptide: N-(5'-phosphoribosyl)anthranilate isomerase (213 aa).

It belongs to the TrpF family.

It carries out the reaction N-(5-phospho-beta-D-ribosyl)anthranilate = 1-(2-carboxyphenylamino)-1-deoxy-D-ribulose 5-phosphate. It functions in the pathway amino-acid biosynthesis; L-tryptophan biosynthesis; L-tryptophan from chorismate: step 3/5. In Rhodopseudomonas palustris (strain TIE-1), this protein is N-(5'-phosphoribosyl)anthranilate isomerase.